The primary structure comprises 677 residues: Methionine--tRNA ligase (677 aa).

The 'HIGH' region signature appears at 15–25 (PYANGSIHLGH). Residues C146, C149, C159, and C162 each coordinate Zn(2+). The short motif at 333–337 (KMSKS) is the 'KMSKS' region element. Residue K336 coordinates ATP. The 103-residue stretch at 575-677 (DFAKVDLRVA…AGAKPGHQVK (103 aa)) folds into the tRNA-binding domain.

The protein belongs to the class-I aminoacyl-tRNA synthetase family. MetG type 1 subfamily. Homodimer. It depends on Zn(2+) as a cofactor.

It is found in the cytoplasm. It catalyses the reaction tRNA(Met) + L-methionine + ATP = L-methionyl-tRNA(Met) + AMP + diphosphate. In terms of biological role, is required not only for elongation of protein synthesis but also for the initiation of all mRNA translation through initiator tRNA(fMet) aminoacylation. In Escherichia coli (strain UTI89 / UPEC), this protein is Methionine--tRNA ligase.